Here is a 194-residue protein sequence, read N- to C-terminus: MSPNPSSTGPVIAPAPKGILDPATGRPIGANDPYFLEVRHELSDKGFFVATADDLITWARTGSLMWMTFGLACCAVEMMQVSMPRYDVERFGFAPRASPRQSDVMIVAGTLTNKMAPALRKVYDQMPEPRYVISMGSCANGGGYYHYSYSVVRGCDRIVPIDIYVPGCPPTAEALLYGVLLLQKKIRRTGTIER.

Positions 73, 74, 138, and 168 each coordinate [4Fe-4S] cluster.

This sequence belongs to the complex I 20 kDa subunit family. NDH-1 is composed of 14 different subunits. Subunits NuoB, C, D, E, F, and G constitute the peripheral sector of the complex. The cofactor is [4Fe-4S] cluster.

Its subcellular location is the cell inner membrane. The enzyme catalyses a quinone + NADH + 5 H(+)(in) = a quinol + NAD(+) + 4 H(+)(out). In terms of biological role, NDH-1 shuttles electrons from NADH, via FMN and iron-sulfur (Fe-S) centers, to quinones in the respiratory chain. The immediate electron acceptor for the enzyme in this species is believed to be ubiquinone. Couples the redox reaction to proton translocation (for every two electrons transferred, four hydrogen ions are translocated across the cytoplasmic membrane), and thus conserves the redox energy in a proton gradient. In Bradyrhizobium sp. (strain BTAi1 / ATCC BAA-1182), this protein is NADH-quinone oxidoreductase subunit B.